The primary structure comprises 399 residues: Lysosomal acid lipase/cholesteryl ester hydrolase (399 aa).

Positions 1–27 (MKMRFLGLVVCLVLWTLHSEGSGGKLT) are cleaved as a signal peptide. Residues 28 to 76 (AVDPETNMNVSEIISYWGFPSEEYLVETEDGYILCLNRIPHGRKNHSDK) constitute a propeptide, removed in mature form. N-linked (GlcNAc...) asparagine glycans are attached at residues N36, N72, N101, and N161. Residues 80–380 (PVVFLQHGLL…EWEHLDFIWG (301 aa)) enclose the AB hydrolase-1 domain. S174 functions as the Charge relay system in the catalytic mechanism. 2 N-linked (GlcNAc...) asparagine glycosylation sites follow: N273 and N321. The active-site Charge relay system is the H374.

This sequence belongs to the AB hydrolase superfamily. Lipase family. Monomer. Glycosylation is not essential for catalytic activity. As to expression, most abundantly expressed in brain, lung, kidney and mammary gland, a moderate expression seen in placenta and expressed at low levels in the liver and heart.

It localises to the lysosome. The catalysed reaction is a sterol ester + H2O = a sterol + a fatty acid + H(+). It catalyses the reaction cholesteryl (9Z-octadecenoate) + H2O = cholesterol + (9Z)-octadecenoate + H(+). The enzyme catalyses a triacylglycerol + H2O = a 1,2-diacylglycerol + a fatty acid + H(+). It carries out the reaction 1,2-di-(9Z-octadecenoyl)-glycerol + (9Z)-octadecenoate + H(+) = 1,2,3-tri-(9Z-octadecenoyl)-glycerol + H2O. The catalysed reaction is a 1,2-diacylglycerol + H2O = a 1-acylglycerol + a fatty acid + H(+). It catalyses the reaction 1,2-di-(9Z-octadecenoyl)-glycerol + H2O = 1-(9Z-octadecenoyl)-glycerol + (9Z)-octadecenoate + H(+). The enzyme catalyses a 1,3-diacylglycerol + H2O = a 1-acylglycerol + a fatty acid + H(+). It carries out the reaction 1,3-di-(9Z-octadecenoyl)-glycerol + H2O = 1-(9Z-octadecenoyl)-glycerol + (9Z)-octadecenoate + H(+). Catalyzes the deacylation of cholesteryl ester core lipids of endocytosed low density lipoproteins to generate free fatty acids and cholesterol. Hydrolyzes triglycerides (1,2,3-triacylglycerol) and diglycerides (such as 1,2-diacylglycerol and 1,3-diacylglycerol) with preference for the acyl moieties at the sn-1 or sn-3 positions. In Homo sapiens (Human), this protein is Lysosomal acid lipase/cholesteryl ester hydrolase (LIPA).